A 374-amino-acid polypeptide reads, in one-letter code: Speckle-type POZ protein (374 aa).

Residues 31–161 (KFSYMWTINN…DDKLTLFCEV (131 aa)) enclose the MATH domain. The interval 71-191 (VNPKGLDEES…PECRLADELG (121 aa)) is required for nuclear localization. The interval 123-133 (YRFVQGKDWGF) is important for binding substrate proteins. The 125-residue stretch at 173–297 (QNTMNMVKVP…MCEDALCSNL (125 aa)) folds into the BTB domain. Important for homodimerization regions lie at residues 186–217 (LADELGGLWENSRFTDCCLCVAGQEFQAHKAI) and 297–355 (LSVE…AYRS).

The protein belongs to the Tdpoz family. In terms of assembly, interacts with GLI2 and GLI3. Homodimer and homooligomer. Heterodimer with SPOPL. Each dimer interacts with two CUL3 molecules. Part of cullin-RING-based BCR (BTB-CUL3-RBX1) E3 ubiquitin-protein ligase complexes that contain CUL3 and homodimeric SPOP, or the heterodimer formed by SPOP and SPOPL, plus a target protein, such as MACROH2A1, PDX1/IPF1, BMI1, BRMS1 and DAXX. Interacts with IRF1; this interaction mediates IRF1 proteasomal degradation. Interacts with HNF1A.

It localises to the nucleus. Its subcellular location is the nucleus speckle. It participates in protein modification; protein ubiquitination. Component of a cullin-RING-based BCR (BTB-CUL3-RBX1) E3 ubiquitin-protein ligase complex that mediates the ubiquitination of target proteins, leading most often to their proteasomal degradation. In complex with CUL3, involved in ubiquitination and proteasomal degradation of BRMS1, DAXX, PDX1/IPF1, GLI2 and GLI3. In complex with CUL3, involved in ubiquitination of MACROH2A1 and BMI1; this does not lead to their proteasomal degradation. Inhibits transcriptional activation of PDX1/IPF1 targets, such as insulin, by promoting PDX1/IPF1 degradation. The cullin-RING-based BCR (BTB-CUL3-RBX1) E3 ubiquitin-protein ligase complex containing homodimeric SPOP has higher ubiquitin ligase activity than the complex that contains the heterodimer formed by SPOP and SPOPL. Involved in the regulation of bromodomain and extra-terminal motif (BET) proteins BRD2, BRD3, BRD4 stability.Plays an essential role for proper translation, but not for their degradation, of critical DNA replication licensing factors CDT1 and CDC6, thereby participating in DNA synthesis and cell proliferation. Regulates interferon regulatory factor 1/IRF1 proteasomal turnover by targeting S/T-rich degrons in IRF1. Involved in ubiquitination of BRDT and promotes its degradation, thereby regulates histone removal in early condensing spermatids prior to histone-to-protamine exchange. This Bos taurus (Bovine) protein is Speckle-type POZ protein (SPOP).